Here is a 194-residue protein sequence, read N- to C-terminus: 23 kDa U4/U6.U5 small nuclear ribonucleoprotein component (194 aa).

A C2H2-type zinc finger spans residues 80–104; sequence FYCDICNLTFKDTLQYIDHLNHKVH.

Component of the U4/U6-U5 tri-snRNP complex composed of the U4, U6 and U5 snRNAs and at least PRP3, PRP4, PRP6, PRP8, PRP18, PRP31, PRP38, SNU13, SNU23, SNU66, SNU114, SPP381, SMB1, SMD1, SMD2, SMD3, SMX2, SMX3, LSM2, LSM3, LSM4, LSM5, LSM6, LSM7, LSM8, BRR2 and DIB1.

The protein localises to the nucleus. Its function is as follows. Participates in pre-mRNA splicing. Part of the U4/U5/U6 tri-snRNP complex, one of the building blocks of the spliceosome. The chain is 23 kDa U4/U6.U5 small nuclear ribonucleoprotein component (SNU23) from Saccharomyces cerevisiae (strain ATCC 204508 / S288c) (Baker's yeast).